We begin with the raw amino-acid sequence, 70 residues long: U-scoloptoxin(20)-Sm1a (70 aa).

The first 24 residues, 1-24, serve as a signal peptide directing secretion; sequence MKKRSQVFCIFIAMVLLILPLSMS.

It belongs to the scoloptoxin-20 family. Contains 3 disulfide bonds. As to expression, expressed by the venom gland.

It localises to the secreted. The protein is U-scoloptoxin(20)-Sm1a of Scolopendra morsitans (Tanzanian blue ringleg centipede).